A 206-amino-acid polypeptide reads, in one-letter code: Urease accessory protein UreG (206 aa).

Residue 14–21 (GPVGSGKT) coordinates GTP.

This sequence belongs to the SIMIBI class G3E GTPase family. UreG subfamily. In terms of assembly, homodimer. UreD, UreF and UreG form a complex that acts as a GTP-hydrolysis-dependent molecular chaperone, activating the urease apoprotein by helping to assemble the nickel containing metallocenter of UreC. The UreE protein probably delivers the nickel.

Its subcellular location is the cytoplasm. Facilitates the functional incorporation of the urease nickel metallocenter. This process requires GTP hydrolysis, probably effectuated by UreG. The polypeptide is Urease accessory protein UreG (Brucella anthropi (strain ATCC 49188 / DSM 6882 / CCUG 24695 / JCM 21032 / LMG 3331 / NBRC 15819 / NCTC 12168 / Alc 37) (Ochrobactrum anthropi)).